The sequence spans 249 residues: ATP synthase subunit a (249 aa).

6 helical membrane passes run 30–50, 86–106, 115–135, 146–166, 191–211, and 218–238; these read QSPL…YVGM, FFPF…LGLL, HIAV…LASI, FLPA…EIIS, VFAG…VLAI, and IALT…FAIL.

This sequence belongs to the ATPase A chain family. F-type ATPases have 2 components, CF(1) - the catalytic core - and CF(0) - the membrane proton channel. CF(1) has five subunits: alpha(3), beta(3), gamma(1), delta(1), epsilon(1). CF(0) has three main subunits: a(1), b(2) and c(9-12). The alpha and beta chains form an alternating ring which encloses part of the gamma chain. CF(1) is attached to CF(0) by a central stalk formed by the gamma and epsilon chains, while a peripheral stalk is formed by the delta and b chains.

It is found in the cell inner membrane. Its function is as follows. Key component of the proton channel; it plays a direct role in the translocation of protons across the membrane. The polypeptide is ATP synthase subunit a (Gluconobacter oxydans (strain 621H) (Gluconobacter suboxydans)).